Reading from the N-terminus, the 89-residue chain is Defensin-like protein 78 (89 aa).

Positions 1-30 (MANNMVASPYKNTFMMIALVLILLISGSEA) are cleaved as a signal peptide. 4 disulfide bridges follow: cysteine 40/cysteine 75, cysteine 44/cysteine 67, cysteine 52/cysteine 73, and cysteine 56/cysteine 74.

It belongs to the DEFL family.

Its subcellular location is the secreted. In Arabidopsis thaliana (Mouse-ear cress), this protein is Defensin-like protein 78.